The chain runs to 318 residues: Ankyrin repeat and SOCS box protein 7 (318 aa).

ANK repeat units lie at residues 13–42 (QEESQIQAAVAAGDVHTVRKMLEQGYSPNG), 46–75 (NGWTLLHFSAARGKERCVRVFLEHGADPTV), 80–109 (GGFTALHYAAMHGRARIARLMLESEYRSDI), 116–145 (DGWTPLHVAAHYGRDSFVRLLLEFKAEVDP), 149–178 (KGTTPLQLAIIRERSSCVKILLDHNANIDI), 180–208 (NGFLLRYAVIKSNHSYCRMFLQRGADTNL), and 213–242 (DGQTPLHLSALRDDVLCARMLYNYGADTNT). One can recognise an SOCS box domain in the interval 265–318 (LDFLQEVTRQPRNLQDLCRIKIRQCIGLQNLKLLDELPIAKVMKDYLKHKSDDI).

Belongs to the ankyrin SOCS box (ASB) family. As to quaternary structure, interacts with CUL5. Interacts with RNF7. Interacts with PSRC1.

The protein operates within protein modification; protein ubiquitination. Functionally, probable substrate-recognition component of a SCF-like ECS (Elongin-Cullin-SOCS-box protein) E3 ubiquitin-protein ligase complex which mediates the ubiquitination and subsequent proteasomal degradation of target proteins. Plays a role in spindle dynamics and genome integrity by targeting the mitotic progression protein PSRC1 for proteasomal degradation in a cell cycle-dependent manner. Also participates in meiosis by mediating the proper attachment between kinetochores and microtubules. This Pongo abelii (Sumatran orangutan) protein is Ankyrin repeat and SOCS box protein 7 (ASB7).